A 326-amino-acid polypeptide reads, in one-letter code: N-acetyl-gamma-glutamyl-phosphate reductase (326 aa).

Cysteine 155 is an active-site residue.

It belongs to the NAGSA dehydrogenase family. Type 1 subfamily.

The protein localises to the cytoplasm. The catalysed reaction is N-acetyl-L-glutamate 5-semialdehyde + phosphate + NADP(+) = N-acetyl-L-glutamyl 5-phosphate + NADPH + H(+). The protein operates within amino-acid biosynthesis; L-arginine biosynthesis; N(2)-acetyl-L-ornithine from L-glutamate: step 3/4. Catalyzes the NADPH-dependent reduction of N-acetyl-5-glutamyl phosphate to yield N-acetyl-L-glutamate 5-semialdehyde. This Shewanella baltica (strain OS195) protein is N-acetyl-gamma-glutamyl-phosphate reductase.